The following is a 420-amino-acid chain: Glutamyl-tRNA reductase (420 aa).

Substrate contacts are provided by residues 49–52, Ser-109, 114–116, and Gln-120; these read TCNR and EPQ. Cys-50 functions as the Nucleophile in the catalytic mechanism. Position 189 to 194 (189 to 194) interacts with NADP(+); sequence GAGETI.

The protein belongs to the glutamyl-tRNA reductase family. In terms of assembly, homodimer.

The enzyme catalyses (S)-4-amino-5-oxopentanoate + tRNA(Glu) + NADP(+) = L-glutamyl-tRNA(Glu) + NADPH + H(+). It functions in the pathway porphyrin-containing compound metabolism; protoporphyrin-IX biosynthesis; 5-aminolevulinate from L-glutamyl-tRNA(Glu): step 1/2. Catalyzes the NADPH-dependent reduction of glutamyl-tRNA(Glu) to glutamate 1-semialdehyde (GSA). The sequence is that of Glutamyl-tRNA reductase from Yersinia pseudotuberculosis serotype O:1b (strain IP 31758).